The sequence spans 473 residues: MSFSRRQFLQASGLAVCLGSLSSSVRAGSVSDRKLPIPPLLESRNGQPLFVTLQKVHWAFDGTQKTEVWGINGSMPGPTIKVKSGDDVKLIYSNRLNEPVSMTVSGLLVPGTQIGGAARMMSPGAYWSPVLPIRQKAATCWYHANTPFKMAPHVYNGLVGMWIVEDEESKSLPLPKHYGVNDFPIILQDKRLDNFGTPQYDKEAATEGFYGDTLLVNGCEDPYIEVSRGWIRLRLVNASNARRYELSANDGRSLYLIASDQGLLTSPVELKSIPMAPGERREILIDLSEGEEVTITAGQSAGFMDRLRGIFEPSNLLRNTNVLTIKPTGLMSLVTDKVPQQLVVDDTQITTSIQPRTIQLQNSPPGINNARWELSRIDLVGKQNGWERWLVTVETPQPFHIEGARFKVINHDGQKPAPADFGWKDTVWIEKQSELLVELKQPSYSHFPFVYYSQILENADKGIAGQMEITPSE.

The tat-type signal signal peptide spans methionine 1–alanine 27.

It belongs to the FtsP family. Post-translationally, predicted to be exported by the Tat system. The position of the signal peptide cleavage has not been experimentally proven.

It is found in the periplasm. In terms of biological role, cell division protein that is required for growth during stress conditions. May be involved in protecting or stabilizing the divisomal assembly under conditions of stress. In Proteus mirabilis (strain HI4320), this protein is Cell division protein FtsP.